The primary structure comprises 331 residues: Aromatic 2-oxoacid reductase (331 aa).

NAD(+)-binding positions include 154–155 (RI), aspartate 175, 205–206 (AP), asparagine 211, 232–234 (AAR), and aspartate 258. Residue arginine 234 is part of the active site. Glutamate 263 is a catalytic residue. Residue histidine 295 is the Proton donor of the active site.

It belongs to the D-isomer specific 2-hydroxyacid dehydrogenase family.

The catalysed reaction is (R)-3-phenyllactate + NAD(+) = 3-phenylpyruvate + NADH + H(+). It carries out the reaction (2R)-2-hydroxy-3-(4-hydroxyphenyl)propanoate + NAD(+) = 3-(4-hydroxyphenyl)pyruvate + NADH + H(+). It catalyses the reaction 3-(indol-3-yl)lactate + NAD(+) = indole-3-pyruvate + NADH + H(+). The protein operates within amino-acid degradation. Functionally, essential for the reductive metabolism of L-phenylalanine, L-tyrosine and L-tryptophan. Catalyzes the conversion of phenylpyruvic acid to phenyllactic acid, 4-hydroxy-phenylpyruvic acid to 4-hydroxy-phenyllactic acid, and indolepyruvic acid to indolelactic acid. The sequence is that of Aromatic 2-oxoacid reductase from Clostridium sporogenes (strain ATCC 7955 / DSM 767 / NBRC 16411 / NCIMB 8053 / NCTC 8594 / PA 3679).